A 477-amino-acid polypeptide reads, in one-letter code: Glycogen synthase (477 aa).

K15 contacts ADP-alpha-D-glucose.

This sequence belongs to the glycosyltransferase 1 family. Bacterial/plant glycogen synthase subfamily.

It carries out the reaction [(1-&gt;4)-alpha-D-glucosyl](n) + ADP-alpha-D-glucose = [(1-&gt;4)-alpha-D-glucosyl](n+1) + ADP + H(+). Its pathway is glycan biosynthesis; glycogen biosynthesis. Functionally, synthesizes alpha-1,4-glucan chains using ADP-glucose. The polypeptide is Glycogen synthase (Streptococcus pneumoniae (strain ATCC 700669 / Spain 23F-1)).